The sequence spans 195 residues: MRLVLLGPPGAGKGTQAQRLVARHGIVQLSTGDMLRAAVAAGTPVGLKAKAVMDAGGLVSDEIVIGIIAERLDSPDAKNGFILDGFPRTVAQAEALDQLLASKGLKLDAVIELVVDQEKLVNRILNRAAEAQAKGEAVRKDDDPVVFKTRLEAYNRDTAVVAPYYKARGQLKQIDGMAPIDQVTAAIDGVLAEAA.

Residue 10-15 (GAGKGT) coordinates ATP. The tract at residues 30–59 (STGDMLRAAVAAGTPVGLKAKAVMDAGGLV) is NMP. AMP is bound by residues threonine 31, arginine 36, 57-59 (GLV), 85-88 (GFPR), and glutamine 92. The interval 126–143 (NRAAEAQAKGEAVRKDDD) is LID. Arginine 127 is a binding site for ATP. Residue arginine 150 participates in AMP binding. Alanine 178 lines the ATP pocket.

The protein belongs to the adenylate kinase family. As to quaternary structure, monomer.

It localises to the cytoplasm. It carries out the reaction AMP + ATP = 2 ADP. It functions in the pathway purine metabolism; AMP biosynthesis via salvage pathway; AMP from ADP: step 1/1. Functionally, catalyzes the reversible transfer of the terminal phosphate group between ATP and AMP. Plays an important role in cellular energy homeostasis and in adenine nucleotide metabolism. The polypeptide is Adenylate kinase (Xanthobacter autotrophicus (strain ATCC BAA-1158 / Py2)).